The primary structure comprises 61 residues: Translational regulator CsrA (61 aa).

It belongs to the CsrA/RsmA family. As to quaternary structure, homodimer; the beta-strands of each monomer intercalate to form a hydrophobic core, while the alpha-helices form wings that extend away from the core.

It is found in the cytoplasm. A key translational regulator that binds mRNA to regulate translation initiation and/or mRNA stability. Mediates global changes in gene expression, shifting from rapid growth to stress survival by linking envelope stress, the stringent response and the catabolite repression systems. Usually binds in the 5'-UTR; binding at or near the Shine-Dalgarno sequence prevents ribosome-binding, repressing translation, binding elsewhere in the 5'-UTR can activate translation and/or stabilize the mRNA. Its function is antagonized by small RNA(s). This is Translational regulator CsrA from Actinobacillus succinogenes (strain ATCC 55618 / DSM 22257 / CCUG 43843 / 130Z).